A 210-amino-acid polypeptide reads, in one-letter code: Casparian strip membrane protein 1 (210 aa).

The disordered stretch occupies residues 1–25 (MEKSEATTIDVAETSRESKGKAPLL). Over 1 to 48 (MEKSEATTIDVAETSRESKGKAPLLRDPPAWVPAAVERQRAAPAYKRG) the chain is Cytoplasmic. The helical transmembrane segment at 49–69 (VAIFDLILRISAATAALAATI) threads the bilayer. The Extracellular segment spans residues 70–98 (TMGTTEQTLPFFTQFFQFQASYDDLPTFT). The helical transmembrane segment at 99–119 (FFVIAMSIVTGYLVLSVPFSI) threads the bilayer. Residues 120 to 138 (VCIARPVAAAPRLLLILCD) lie on the Cytoplasmic side of the membrane. Residues 139-159 (TLAVTLNTSAAGASAAIVYLA) form a helical membrane-spanning segment. Topologically, residues 160-183 (HNGNSDANWLAICQQFNDFCQRTS) are extracellular. The chain crosses the membrane as a helical span at residues 184–204 (GAVVASFVAVVLLIFLVVLSA). Residues 205–210 (SALKKH) lie on the Cytoplasmic side of the membrane.

This sequence belongs to the Casparian strip membrane proteins (CASP) family. Homodimer and heterodimers.

It localises to the cell membrane. Its function is as follows. Regulates membrane-cell wall junctions and localized cell wall deposition. Required for establishment of the Casparian strip membrane domain (CSD) and the subsequent formation of Casparian strips, a cell wall modification of the root endodermis that determines an apoplastic barrier between the intraorganismal apoplasm and the extraorganismal apoplasm and prevents lateral diffusion. This is Casparian strip membrane protein 1 from Erythranthe guttata (Yellow monkey flower).